We begin with the raw amino-acid sequence, 307 residues long: Lipid droplet-associated hydrolase (307 aa).

Serine 119 (nucleophile) is an active-site residue. The potential amphipathic helix required for binding to lipid droplets stretch occupies residues 157–200 (GWVFTKVAMPLYSVFGYIFFSFFNFLPVWLRLMLIQIYFLIFSI). A run of 2 helical transmembrane segments spans residues 166 to 186 (PLYS…PVWL) and 188 to 208 (LMLI…LGTA). Residues aspartate 254 and histidine 283 each act as charge relay system in the active site.

The protein belongs to the AB hydrolase superfamily. LDAH family. In terms of assembly, interacts with the juvenile hormone hydrolase enzymes Jheh1 and Jheh2. Also interacts with Hmu, Cpr, Gp93 and Pvr. Expressed in accessory glands.

The protein resides in the lipid droplet. It localises to the endoplasmic reticulum membrane. It catalyses the reaction a cholesterol ester + H2O = cholesterol + a fatty acid + H(+). In terms of biological role, probable serine lipid hydrolase associated with lipid droplets. Appears to lack or have very low cholesterol esterase activity. Appears to lack triglyceride lipase activity. Involved in cholesterol and triglyceride homeostasis; stimulates cellular triglyceride accumulation and cellular cholesterol release. Involved in negatively regulating juvenile hormone (JH) and possibly, insulin signaling activities such as triacylglycerols (TAG) storage, and thereby plays a role in the endocrine regulation of organismal growth and survival. Likely functions by enhancing the activity of the JH hydrolase enzymes Jheh1 and Jheh2. Required for lipid droplet positioning and fat storage. The chain is Lipid droplet-associated hydrolase from Drosophila melanogaster (Fruit fly).